The following is a 460-amino-acid chain: Nuclear transport factor 2 (460 aa).

Positions Val-15–Phe-131 constitute an NTF2 domain. 3 disordered regions span residues Glu-207–Pro-226, Lys-238–Glu-289, and Arg-361–Ser-460. The 78-residue stretch at His-293 to Thr-370 folds into the RRM domain. A compositionally biased stretch (gly residues) spans Arg-373–Arg-382. A compositionally biased stretch (low complexity) spans Gly-383–Asn-394. 2 stretches are compositionally biased toward gly residues: residues Gly-399–Phe-416 and Gly-450–Ser-460.

Interacts with MBD6.

It localises to the cytoplasm. The protein localises to the nucleus. In terms of biological role, involved in RNA-directed DNA methylation (RdDM). This is Nuclear transport factor 2 from Arabidopsis thaliana (Mouse-ear cress).